A 116-amino-acid polypeptide reads, in one-letter code: Large ribosomal subunit protein bL17 (116 aa).

This sequence belongs to the bacterial ribosomal protein bL17 family. In terms of assembly, part of the 50S ribosomal subunit. Contacts protein L32.

The polypeptide is Large ribosomal subunit protein bL17 (Fusobacterium nucleatum subsp. nucleatum (strain ATCC 25586 / DSM 15643 / BCRC 10681 / CIP 101130 / JCM 8532 / KCTC 2640 / LMG 13131 / VPI 4355)).